The chain runs to 387 residues: Putative glutamate--cysteine ligase 2 (387 aa).

This sequence belongs to the glutamate--cysteine ligase type 2 family. YbdK subfamily.

It carries out the reaction L-cysteine + L-glutamate + ATP = gamma-L-glutamyl-L-cysteine + ADP + phosphate + H(+). Functionally, ATP-dependent carboxylate-amine ligase which exhibits weak glutamate--cysteine ligase activity. This chain is Putative glutamate--cysteine ligase 2, found in Pseudomonas fluorescens (strain ATCC BAA-477 / NRRL B-23932 / Pf-5).